The chain runs to 390 residues: Enoyl-[acyl-carrier-protein] reductase [NADH], chloroplastic (390 aa).

The N-terminal 74 residues, 1–74 (MAATAASSLQ…CKRPFSFSTR (74 aa)), are a transit peptide targeting the chloroplast. Leucine 53 and asparagine 170 together coordinate NADP(+). Catalysis depends on serine 239, which acts as the Proton donor. NADP(+) is bound by residues lysine 282 and serine 314. Lysine 282 (lowers pKa of active site Tyr) is an active-site residue.

It belongs to the short-chain dehydrogenases/reductases (SDR) family. FabI subfamily. As to quaternary structure, homotetramer. Expressed in flowers and siliques and at lower levels in roots and leaves (at protein level).

Its subcellular location is the plastid. The protein localises to the chloroplast. The enzyme catalyses a 2,3-saturated acyl-[ACP] + NAD(+) = a (2E)-enoyl-[ACP] + NADH + H(+). The protein operates within lipid metabolism; fatty acid biosynthesis. Its activity is regulated as follows. Inhibited by the phytotoxin cyperin and the synthetic antimicrobial compound triclosan. Its function is as follows. Catalyzes the NAD-dependent reduction of a carbon-carbon double bond in an enoyl moiety that is covalently linked to an acyl carrier protein (ACP). Catalyzes the last reduction step in the de novo synthesis cycle of fatty acids. Involved in the elongation cycle of fatty acids which are used in lipid metabolism. Required for normal plant growth. This Arabidopsis thaliana (Mouse-ear cress) protein is Enoyl-[acyl-carrier-protein] reductase [NADH], chloroplastic (MOD1).